Consider the following 78-residue polypeptide: Defensin-like protein 149 (78 aa).

The first 25 residues, 1-25, serve as a signal peptide directing secretion; it reads MMKKLIQLSFTVMIIFTILVLGVVA. Disulfide bonds link Cys36–Cys77, Cys45–Cys65, Cys50–Cys71, and Cys54–Cys73.

Belongs to the DEFL family.

Its subcellular location is the secreted. The sequence is that of Defensin-like protein 149 (LCR5) from Arabidopsis thaliana (Mouse-ear cress).